We begin with the raw amino-acid sequence, 69 residues long: UPF0270 protein VCM66_2532 (69 aa).

This sequence belongs to the UPF0270 family.

This Vibrio cholerae serotype O1 (strain M66-2) protein is UPF0270 protein VCM66_2532.